Here is a 122-residue protein sequence, read N- to C-terminus: MIQMQSNLDVADNSGAKRVQCIKVLGGSKRRTASVGDVIVVSVKEAQPRAKVKKGDVHRAVIVRTKKDVRRPDGSVIRFDSNAAVLVSKNEEPIGTRIFGPVVRELRGRGFMKIISLAPEVL.

Belongs to the universal ribosomal protein uL14 family. Part of the 50S ribosomal subunit. Forms a cluster with proteins L3 and L19. In the 70S ribosome, L14 and L19 interact and together make contacts with the 16S rRNA in bridges B5 and B8.

Its function is as follows. Binds to 23S rRNA. Forms part of two intersubunit bridges in the 70S ribosome. This Erythrobacter litoralis (strain HTCC2594) protein is Large ribosomal subunit protein uL14.